The following is a 223-amino-acid chain: Urease accessory protein UreF (223 aa).

The protein belongs to the UreF family. In terms of assembly, ureD, UreF and UreG form a complex that acts as a GTP-hydrolysis-dependent molecular chaperone, activating the urease apoprotein by helping to assemble the nickel containing metallocenter of UreC. The UreE protein probably delivers the nickel.

It is found in the cytoplasm. Required for maturation of urease via the functional incorporation of the urease nickel metallocenter. In Rhizobium etli (strain ATCC 51251 / DSM 11541 / JCM 21823 / NBRC 15573 / CFN 42), this protein is Urease accessory protein UreF.